A 260-amino-acid polypeptide reads, in one-letter code: 3-methyl-2-oxobutanoate hydroxymethyltransferase (260 aa).

2 residues coordinate Mg(2+): Asp-44 and Asp-83. 3-methyl-2-oxobutanoate-binding positions include 44–45, Asp-83, and Lys-113; that span reads DS. Glu-115 is a binding site for Mg(2+). Residue Glu-182 is the Proton acceptor of the active site.

This sequence belongs to the PanB family. As to quaternary structure, homodecamer; pentamer of dimers. Mg(2+) is required as a cofactor.

It localises to the cytoplasm. The enzyme catalyses 3-methyl-2-oxobutanoate + (6R)-5,10-methylene-5,6,7,8-tetrahydrofolate + H2O = 2-dehydropantoate + (6S)-5,6,7,8-tetrahydrofolate. It participates in cofactor biosynthesis; (R)-pantothenate biosynthesis; (R)-pantoate from 3-methyl-2-oxobutanoate: step 1/2. Functionally, catalyzes the reversible reaction in which hydroxymethyl group from 5,10-methylenetetrahydrofolate is transferred onto alpha-ketoisovalerate to form ketopantoate. The protein is 3-methyl-2-oxobutanoate hydroxymethyltransferase of Synechocystis sp. (strain ATCC 27184 / PCC 6803 / Kazusa).